Here is a 372-residue protein sequence, read N- to C-terminus: Adaptive-response sensory kinase SasA (372 aa).

The Histidine kinase domain maps to M147–Q360. H150 bears the Phosphohistidine; by autocatalysis mark.

Homooligomerizes. Interacts with KaiC. Participates in the KaiBC complex, whose core is composed of a KaiC homohexamer and 6 KaiB.

It carries out the reaction ATP + protein L-histidine = ADP + protein N-phospho-L-histidine.. In terms of biological role, member of the two-component regulatory system SasA/RpaA involved in genome-wide circadian gene expression. One of several clock output pathways. Participates in the Kai clock protein complex, the main circadian regulator in cyanobacteria, via its interaction with KaiC. KaiC enhances the autophosphorylation activity of SasA, which then transfers its phosphate group to RpaA to activate it. In addition to its output function, recruits fold-shifted KaiB (KaiB(fs)) to KaiC to cooperatively form the KaiB(6):KaiC(6) complex (independent of SasA kinase activity). Required for robustness of the circadian rhythm of gene expression and is involved in clock output, also required for adaptation to light/dark cycles. This chain is Adaptive-response sensory kinase SasA, found in Prochlorococcus marinus (strain MIT 9301).